The chain runs to 349 residues: Galactose-1-phosphate uridylyltransferase (349 aa).

Position 29 to 32 (29 to 32 (RAKR)) interacts with UDP-alpha-D-glucose. Positions 53 and 56 each coordinate Zn(2+). 78–79 (ND) contributes to the UDP-alpha-D-glucose binding site. A Zn(2+)-binding site is contributed by H116. UDP-alpha-D-glucose-binding positions include N154 and 160-162 (GCS). H165 is a Zn(2+) binding site. The active-site Tele-UMP-histidine intermediate is the H167. Q169 contributes to the UDP-alpha-D-glucose binding site. Fe cation-binding residues include E183, H282, H297, and H299. UDP-alpha-D-glucose contacts are provided by residues 312–313 (KF), 317–318 (YE), and Q324.

It belongs to the galactose-1-phosphate uridylyltransferase type 1 family. Requires Zn(2+) as cofactor.

The catalysed reaction is alpha-D-galactose 1-phosphate + UDP-alpha-D-glucose = alpha-D-glucose 1-phosphate + UDP-alpha-D-galactose. The protein operates within carbohydrate metabolism; galactose metabolism. The chain is Galactose-1-phosphate uridylyltransferase (galT) from Haemophilus influenzae (strain ATCC 51907 / DSM 11121 / KW20 / Rd).